Here is a 301-residue protein sequence, read N- to C-terminus: Ribosome-inactivating protein (301 aa).

A propeptide spans 1-16 (MAEITLEPSDLMAQTN) (or 12 (in 10% of the molecules)). Positions 162-186 (MATLEEEEVKMQMQMPEAADLAAAA) are excised as a propeptide. The active site involves glutamate 207. The propeptide occupies 258-301 (VIPDMQKLGIKDKNEAARIVALVKNQTTAAAATAASADNDDDEA).

It belongs to the ribosome-inactivating protein family. Type 1 RIP subfamily. Synthesized and stored in the kernel as a 34 kDa inactive precursor. During germination, this neutral precursor is converted into a basic, active form by limited proteolysis, which removes 25 AA of net charge -6 from the center of the polypeptide chain. Additional processing also occurs at the N- and C-termini of the polypeptide. A two-chain active RIP (comprised of 16.5 and 8.5 kDa fragments that remain tightly associated) is produced from this processing event.

It carries out the reaction Endohydrolysis of the N-glycosidic bond at one specific adenosine on the 28S rRNA.. In terms of biological role, potent catalytic inactivator of eukaryotic protein synthesis. It may be a component of natural defense mechanisms involved in protecting the kernel against soil-borne fungal infections. The polypeptide is Ribosome-inactivating protein (Zea mays (Maize)).